The sequence spans 95 residues: Aspartyl/glutamyl-tRNA(Asn/Gln) amidotransferase subunit C (95 aa).

It belongs to the GatC family. As to quaternary structure, heterotrimer of A, B and C subunits.

It catalyses the reaction L-glutamyl-tRNA(Gln) + L-glutamine + ATP + H2O = L-glutaminyl-tRNA(Gln) + L-glutamate + ADP + phosphate + H(+). The catalysed reaction is L-aspartyl-tRNA(Asn) + L-glutamine + ATP + H2O = L-asparaginyl-tRNA(Asn) + L-glutamate + ADP + phosphate + 2 H(+). In terms of biological role, allows the formation of correctly charged Asn-tRNA(Asn) or Gln-tRNA(Gln) through the transamidation of misacylated Asp-tRNA(Asn) or Glu-tRNA(Gln) in organisms which lack either or both of asparaginyl-tRNA or glutaminyl-tRNA synthetases. The reaction takes place in the presence of glutamine and ATP through an activated phospho-Asp-tRNA(Asn) or phospho-Glu-tRNA(Gln). The polypeptide is Aspartyl/glutamyl-tRNA(Asn/Gln) amidotransferase subunit C (Methylobacterium sp. (strain 4-46)).